Reading from the N-terminus, the 446-residue chain is MKVVVVGCTHAGTSAVKSILANHPEAEVTVYERNDNISFLSCGIALYVGGVVKNAADLFYSNPEELASLGATVKMEHNVEEINVDDKTVTAKNLQTGATETVSYDKLVMTTGSWPIIPPIPGIDAENILLCKNYSQANVIIEKAKDAKRVVVVGGGYIGIELVEAFVESGKQVTLVDGLDRILNKYLDKPFTDVLEKELVDRGVNLALGENVQQFVADEQGKVAKVITPSQEFEADMVIMCVGFRPNTELLKDKVDMLPNGAIEVNEYMQTSNPDIFAAGDSAVVHYNPSQTKNYIPLATNAVRQGMLVGRNLTEQKLAYRGTQGTSGLYLFGWKIGSTGVTKESAKLNGLDVEATVFEDNYRPEFMPTTEKVLMELVYEKGTQRIVGGQLMSKYDITQSANTLSLAVQNKMTVEDLAISDFFFQPHFDRPWNYLNLLAQAALENM.

Residues 7-11 (GCTHA), Glu32, Cys42, Val79, 110-113 (TTGS), Lys132, and Tyr157 contribute to the FAD site. His10 functions as the Proton acceptor in the catalytic mechanism. Cys42 (redox-active) is an active-site residue. Cys42 is modified (cysteine sulfinic acid (-SO2H)). NAD(+) contacts are provided by residues 150–165 (VVVV…LVEA), Asp177, Tyr186, and Gly243. FAD is bound by residues 271 to 281 (TSNPDIFAAGD), Leu298, Ala299, and Thr300. Gly328 contacts NAD(+). Phe424 contributes to the FAD binding site.

It belongs to the class-III pyridine nucleotide-disulfide oxidoreductase family. In terms of assembly, homodimer. FAD serves as cofactor. In terms of processing, the N-terminus is blocked.

The enzyme catalyses 2 NADH + O2 + 2 H(+) = 2 NAD(+) + 2 H2O. Functionally, catalyzes the four-electron reduction of molecular oxygen to water. This Enterococcus faecalis (strain ATCC 700802 / V583) protein is NADH oxidase (nox).